The sequence spans 122 residues: Large ribosomal subunit protein uL14 (122 aa).

This sequence belongs to the universal ribosomal protein uL14 family. In terms of assembly, part of the 50S ribosomal subunit. Forms a cluster with proteins L3 and L19. In the 70S ribosome, L14 and L19 interact and together make contacts with the 16S rRNA in bridges B5 and B8.

Functionally, binds to 23S rRNA. Forms part of two intersubunit bridges in the 70S ribosome. The protein is Large ribosomal subunit protein uL14 of Cyanothece sp. (strain PCC 7425 / ATCC 29141).